Here is a 322-residue protein sequence, read N- to C-terminus: tRNA uridine(34) hydroxylase (322 aa).

Residues glutamine 125–lysine 219 enclose the Rhodanese domain. Catalysis depends on cysteine 179, which acts as the Cysteine persulfide intermediate.

This sequence belongs to the TrhO family.

The enzyme catalyses uridine(34) in tRNA + AH2 + O2 = 5-hydroxyuridine(34) in tRNA + A + H2O. Functionally, catalyzes oxygen-dependent 5-hydroxyuridine (ho5U) modification at position 34 in tRNAs. The protein is tRNA uridine(34) hydroxylase of Bacillus subtilis (strain 168).